A 271-amino-acid polypeptide reads, in one-letter code: Adenosylcobinamide-GDP ribazoletransferase (271 aa).

Transmembrane regions (helical) follow at residues 4–24 (FLLA…GMSM), 35–55 (YLQT…AYLT), 58–78 (FLPS…ITGL), 108–128 (SLGI…YASI), 135–155 (VLFF…IAEI), 192–212 (FVLG…IGYI), and 246–266 (IIVL…YGGL).

It belongs to the CobS family. Mg(2+) serves as cofactor.

The protein resides in the cell membrane. It carries out the reaction alpha-ribazole + adenosylcob(III)inamide-GDP = adenosylcob(III)alamin + GMP + H(+). It catalyses the reaction alpha-ribazole 5'-phosphate + adenosylcob(III)inamide-GDP = adenosylcob(III)alamin 5'-phosphate + GMP + H(+). It functions in the pathway cofactor biosynthesis; adenosylcobalamin biosynthesis; adenosylcobalamin from cob(II)yrinate a,c-diamide: step 7/7. Functionally, joins adenosylcobinamide-GDP and alpha-ribazole to generate adenosylcobalamin (Ado-cobalamin). Also synthesizes adenosylcobalamin 5'-phosphate from adenosylcobinamide-GDP and alpha-ribazole 5'-phosphate. In Methanococcoides burtonii (strain DSM 6242 / NBRC 107633 / OCM 468 / ACE-M), this protein is Adenosylcobinamide-GDP ribazoletransferase.